Reading from the N-terminus, the 406-residue chain is MARAFLFVLDSFGIGNAPDAGAFGDLGADTLGHIAEFCAAGAADRAGLREGPLNLPNMSALGLMHAARLATGRLPAGMALPERVYGVYGAASEVSRGKDTPSGHWEIAGTPVTFDWGYFPADGDAFPPELVEAICREGDVPGILGNCHASGTDIIARLGEEHMRTGKPICYTSSDSVFQIAAHEQTFGLERLQDLCAVVRRLVDEYNIGRVIARPFVGSDPGSFTRTGNRRDYSVLPPAPTVLDRLKEAGRTVHAIGKIADIFAHQGVTRLTKANGNMALFDASLAAIDEAEDGALIFTNFVDFDMLYGHRRDVAGYAAALEAFDARLPDLDRRLKPGDMVILTADHGCDPTWRGTDHTRERVPVLMFGPTLRSRSVGIVGSFAHIGETVASHLGIDPGPHGRSLI.

6 residues coordinate Mn(2+): aspartate 10, aspartate 305, histidine 310, aspartate 346, histidine 347, and histidine 358.

Belongs to the phosphopentomutase family. Requires Mn(2+) as cofactor.

Its subcellular location is the cytoplasm. It carries out the reaction 2-deoxy-alpha-D-ribose 1-phosphate = 2-deoxy-D-ribose 5-phosphate. The catalysed reaction is alpha-D-ribose 1-phosphate = D-ribose 5-phosphate. It participates in carbohydrate degradation; 2-deoxy-D-ribose 1-phosphate degradation; D-glyceraldehyde 3-phosphate and acetaldehyde from 2-deoxy-alpha-D-ribose 1-phosphate: step 1/2. In terms of biological role, isomerase that catalyzes the conversion of deoxy-ribose 1-phosphate (dRib-1-P) and ribose 1-phosphate (Rib-1-P) to deoxy-ribose 5-phosphate (dRib-5-P) and ribose 5-phosphate (Rib-5-P), respectively. This Sinorhizobium medicae (strain WSM419) (Ensifer medicae) protein is Phosphopentomutase.